The chain runs to 335 residues: Phosphate acyltransferase (335 aa).

It belongs to the PlsX family. As to quaternary structure, homodimer. Probably interacts with PlsY.

The protein resides in the cytoplasm. The catalysed reaction is a fatty acyl-[ACP] + phosphate = an acyl phosphate + holo-[ACP]. It participates in lipid metabolism; phospholipid metabolism. Its function is as follows. Catalyzes the reversible formation of acyl-phosphate (acyl-PO(4)) from acyl-[acyl-carrier-protein] (acyl-ACP). This enzyme utilizes acyl-ACP as fatty acyl donor, but not acyl-CoA. The sequence is that of Phosphate acyltransferase from Streptococcus pyogenes serotype M1.